The following is a 418-amino-acid chain: Serine--tRNA ligase (418 aa).

227–229 (TSE) lines the L-serine pocket. Residues 258–260 (RRE) and Val274 contribute to the ATP site. Glu281 is an L-serine binding site. 345-348 (ELTS) is a binding site for ATP. Thr380 is a binding site for L-serine.

It belongs to the class-II aminoacyl-tRNA synthetase family. Type-1 seryl-tRNA synthetase subfamily. As to quaternary structure, homodimer. The tRNA molecule binds across the dimer.

The protein localises to the cytoplasm. It catalyses the reaction tRNA(Ser) + L-serine + ATP = L-seryl-tRNA(Ser) + AMP + diphosphate + H(+). It carries out the reaction tRNA(Sec) + L-serine + ATP = L-seryl-tRNA(Sec) + AMP + diphosphate + H(+). The protein operates within aminoacyl-tRNA biosynthesis; selenocysteinyl-tRNA(Sec) biosynthesis; L-seryl-tRNA(Sec) from L-serine and tRNA(Sec): step 1/1. Catalyzes the attachment of serine to tRNA(Ser). Is also able to aminoacylate tRNA(Sec) with serine, to form the misacylated tRNA L-seryl-tRNA(Sec), which will be further converted into selenocysteinyl-tRNA(Sec). This chain is Serine--tRNA ligase, found in Rhodococcus opacus (strain B4).